Here is a 496-residue protein sequence, read N- to C-terminus: Sporulation-killing factor biosynthesis protein SkfC (496 aa).

7 consecutive transmembrane segments (helical) span residues 1-21 (MNSLSLVFWSILAVVGLLLFI), 224-244 (VSGMLGSALAMILAILILVFM), 248-268 (TSIIFSLVLGLLIIICQSLTL), 291-311 (LLGILSTLLTGLLTGFVVFIC), 331-351 (IVQIFYGIGAGLISLGVTSLL), 399-419 (LLMIPVIWWMSGNILISIIVS), and 443-463 (FIFGCFLGVLFIKFGFICVLV).

Its subcellular location is the membrane. In terms of biological role, required for production of the bacteriocin SkfA. This is Sporulation-killing factor biosynthesis protein SkfC from Bacillus subtilis (strain 168).